The sequence spans 201 residues: ATP-dependent Clp protease proteolytic subunit (201 aa).

The active-site Nucleophile is the Ser103. His128 is a catalytic residue.

The protein belongs to the peptidase S14 family. As to quaternary structure, fourteen ClpP subunits assemble into 2 heptameric rings which stack back to back to give a disk-like structure with a central cavity, resembling the structure of eukaryotic proteasomes.

It localises to the cytoplasm. The catalysed reaction is Hydrolysis of proteins to small peptides in the presence of ATP and magnesium. alpha-casein is the usual test substrate. In the absence of ATP, only oligopeptides shorter than five residues are hydrolyzed (such as succinyl-Leu-Tyr-|-NHMec, and Leu-Tyr-Leu-|-Tyr-Trp, in which cleavage of the -Tyr-|-Leu- and -Tyr-|-Trp bonds also occurs).. Functionally, cleaves peptides in various proteins in a process that requires ATP hydrolysis. Has a chymotrypsin-like activity. Plays a major role in the degradation of misfolded proteins. The polypeptide is ATP-dependent Clp protease proteolytic subunit (Bordetella avium (strain 197N)).